The sequence spans 184 residues: ATP synthase subunit b 1 (184 aa).

A helical membrane pass occupies residues leucine 4–serine 24.

The protein belongs to the ATPase B chain family. F-type ATPases have 2 components, F(1) - the catalytic core - and F(0) - the membrane proton channel. F(1) has five subunits: alpha(3), beta(3), gamma(1), delta(1), epsilon(1). F(0) has three main subunits: a(1), b(2) and c(10-14). The alpha and beta chains form an alternating ring which encloses part of the gamma chain. F(1) is attached to F(0) by a central stalk formed by the gamma and epsilon chains, while a peripheral stalk is formed by the delta and b chains.

The protein localises to the cell inner membrane. Its function is as follows. F(1)F(0) ATP synthase produces ATP from ADP in the presence of a proton or sodium gradient. F-type ATPases consist of two structural domains, F(1) containing the extramembraneous catalytic core and F(0) containing the membrane proton channel, linked together by a central stalk and a peripheral stalk. During catalysis, ATP synthesis in the catalytic domain of F(1) is coupled via a rotary mechanism of the central stalk subunits to proton translocation. Component of the F(0) channel, it forms part of the peripheral stalk, linking F(1) to F(0). This Cereibacter sphaeroides (strain ATCC 17029 / ATH 2.4.9) (Rhodobacter sphaeroides) protein is ATP synthase subunit b 1.